We begin with the raw amino-acid sequence, 231 residues long: Phosphatidylserine decarboxylase proenzyme (231 aa).

Ser188 functions as the Schiff-base intermediate with substrate; via pyruvic acid in the catalytic mechanism. Ser188 carries the pyruvic acid (Ser); by autocatalysis modification.

The protein belongs to the phosphatidylserine decarboxylase family. PSD-A subfamily. Heterodimer of a large membrane-associated beta subunit and a small pyruvoyl-containing alpha subunit. The cofactor is pyruvate. Post-translationally, is synthesized initially as an inactive proenzyme. Formation of the active enzyme involves a self-maturation process in which the active site pyruvoyl group is generated from an internal serine residue via an autocatalytic post-translational modification. Two non-identical subunits are generated from the proenzyme in this reaction, and the pyruvate is formed at the N-terminus of the alpha chain, which is derived from the carboxyl end of the proenzyme. The post-translation cleavage follows an unusual pathway, termed non-hydrolytic serinolysis, in which the side chain hydroxyl group of the serine supplies its oxygen atom to form the C-terminus of the beta chain, while the remainder of the serine residue undergoes an oxidative deamination to produce ammonia and the pyruvoyl prosthetic group on the alpha chain.

Its subcellular location is the cell membrane. The enzyme catalyses a 1,2-diacyl-sn-glycero-3-phospho-L-serine + H(+) = a 1,2-diacyl-sn-glycero-3-phosphoethanolamine + CO2. It functions in the pathway phospholipid metabolism; phosphatidylethanolamine biosynthesis; phosphatidylethanolamine from CDP-diacylglycerol: step 2/2. Functionally, catalyzes the formation of phosphatidylethanolamine (PtdEtn) from phosphatidylserine (PtdSer). This chain is Phosphatidylserine decarboxylase proenzyme, found in Rickettsia bellii (strain OSU 85-389).